A 149-amino-acid chain; its full sequence is MTSKIEQPRWASKDSAAGAASTPDEKIVLEFMDALTSNDAAKLIEYFAEDTMYQNMPLPPAYGRDAVEQTLAGLFTVMSIDAVETFHIGSSNGLVYTERVDVLRALPTGKSYNLSILGVFQLTEGKITGWRDYFDLREFEEAVDLPLRG.

Residue aspartate 101 is the Proton donor of the active site. The Proton acceptor role is filled by aspartate 132.

Belongs to the limonene-1,2-epoxide hydrolase family. Monomer.

It catalyses the reaction limonene 1,2-epoxide + H2O = limonene-1,2-diol. The protein operates within terpene metabolism; (4R)-limonene degradation; (1S,4R)-1-hydroxylimonen-2-one from (4R)-limonene: step 2/3. Functionally, catalyzes the conversion of limonene-1,2-epoxide to limonene-1,2-diol. Can use both the (-) and (+) isomers of limonene-1,2-epoxide as substrates and also has some activity with 1-methylcyclohexene oxide, cyclohexene oxide and indene oxide as substrates. This chain is Limonene-1,2-epoxide hydrolase (limA), found in Rhodococcus erythropolis (Arthrobacter picolinophilus).